Here is a 323-residue protein sequence, read N- to C-terminus: Mitochondrial glutamate carrier 1 (323 aa).

3 Solcar repeats span residues 6–93 (ISLP…FRHQ), 101–214 (LTLL…LNQL), and 223–312 (SPFY…GIAE). A run of 6 helical transmembrane segments spans residues 12-32 (LING…IDLA), 62-82 (YFGM…EKAI), 107-127 (MLAG…MEML), 189-209 (GLGA…PLFA), 223-243 (SPFY…AVAV), and 292-312 (ALVI…GIAE).

Belongs to the mitochondrial carrier (TC 2.A.29) family. Expressed at high levels in brain, liver, and pancreas.

The protein resides in the mitochondrion inner membrane. The enzyme catalyses L-glutamate(in) + H(+)(in) = L-glutamate(out) + H(+)(out). Mitochondrial glutamate/H(+) symporter. Responsible for the transport of glutamate from the cytosol into the mitochondrial matrix with the concomitant import of a proton. Plays a role in the control of glucose-stimulated insulin secretion. The polypeptide is Mitochondrial glutamate carrier 1 (Homo sapiens (Human)).